We begin with the raw amino-acid sequence, 524 residues long: Origin of replication complex subunit 5 (524 aa).

Positions 1 to 19 are enriched in low complexity; it reads MSQPVTPRRTTRSSASASP. The interval 1 to 56 is disordered; sequence MSQPVTPRRTTRSSASASPSPAPASPTSPPKSRPKPSPRRQLLAAAAAPPKEDGSS. The span at 20-31 shows a compositional bias: pro residues; it reads SPAPASPTSPPK. Residues 39 to 49 are compositionally biased toward low complexity; the sequence is RRQLLAAAAAP. 90 to 97 contacts ATP; the sequence is GGAATGKT.

This sequence belongs to the ORC5 family. Component of the origin recognition complex (ORC) composed of at least ORC1, ORC2, ORC3, ORC4, ORC5 and ORC6. ORC is regulated in a cell-cycle and development dependent manner. It is sequentially assembled at the exit from anaphase of mitosis and disassembled as cells enter S phase.

The protein localises to the nucleus. In terms of biological role, component of the origin recognition complex (ORC) that binds origins of replication. DNA-binding is ATP-dependent. The specific DNA sequences that define origins of replication have not been identified yet. ORC is required to assemble the pre-replication complex necessary to initiate DNA replication. The chain is Origin of replication complex subunit 5 from Oryza sativa subsp. indica (Rice).